We begin with the raw amino-acid sequence, 208 residues long: Calcyphosin-like protein (208 aa).

EF-hand domains follow at residues 39–74 (AGIK…YAVV), 75–110 (MEKE…PMSR), 111–146 (ARKE…KHHP), and 154–191 (SEEQ…VSAS). Ca(2+) contacts are provided by aspartate 52, aspartate 54, asparagine 56, threonine 58, glutamate 63, aspartate 88, aspartate 90, asparagine 92, threonine 94, and glutamate 99.

It localises to the cytoplasm. The sequence is that of Calcyphosin-like protein (CAPSL) from Homo sapiens (Human).